The chain runs to 318 residues: Ribose-phosphate pyrophosphokinase 1 (318 aa).

Position 96-101 (96-101) interacts with ATP; sequence RQDKKD. 4 residues coordinate Mg(2+): aspartate 128, histidine 130, aspartate 139, and aspartate 143. Histidine 130 provides a ligand contact to ATP. The tract at residues 212-227 is binding of phosphoribosylpyrophosphate; that stretch reads KDRVAILVDDMADTCG.

Belongs to the ribose-phosphate pyrophosphokinase family. Homodimer. The active form is probably a hexamer composed of 3 homodimers. Mg(2+) serves as cofactor.

The catalysed reaction is D-ribose 5-phosphate + ATP = 5-phospho-alpha-D-ribose 1-diphosphate + AMP + H(+). It functions in the pathway metabolic intermediate biosynthesis; 5-phospho-alpha-D-ribose 1-diphosphate biosynthesis; 5-phospho-alpha-D-ribose 1-diphosphate from D-ribose 5-phosphate (route I): step 1/1. With respect to regulation, activated by magnesium and inorganic phosphate. Its function is as follows. Catalyzes the synthesis of phosphoribosylpyrophosphate (PRPP) that is essential for nucleotide synthesis. This is Ribose-phosphate pyrophosphokinase 1 (PRPS1) from Bos taurus (Bovine).